The following is a 331-amino-acid chain: Tetraacyldisaccharide 4'-kinase (331 aa).

55–62 lines the ATP pocket; sequence TAGGNGKT.

This sequence belongs to the LpxK family.

It carries out the reaction a lipid A disaccharide + ATP = a lipid IVA + ADP + H(+). It participates in glycolipid biosynthesis; lipid IV(A) biosynthesis; lipid IV(A) from (3R)-3-hydroxytetradecanoyl-[acyl-carrier-protein] and UDP-N-acetyl-alpha-D-glucosamine: step 6/6. In terms of biological role, transfers the gamma-phosphate of ATP to the 4'-position of a tetraacyldisaccharide 1-phosphate intermediate (termed DS-1-P) to form tetraacyldisaccharide 1,4'-bis-phosphate (lipid IVA). In Edwardsiella ictaluri (strain 93-146), this protein is Tetraacyldisaccharide 4'-kinase.